Reading from the N-terminus, the 612-residue chain is MSFKATITESGKQNIWFRAIYVLSTIQDDIKITVTTNELIAWSMNETDTTLCQVRFQKSFFEEYEFKPHEIVFGENGVQVIEDTYGNSHKLYSFRVNGRHLTTISRKPDGDGIKSFTIAVNNTSTCPESLANRLIVVIEMDSLIVKEYCPQFQPIKYDPIIINLKYKRRFLDVFGTAASDRNPQEPLDPKLLDVFTNTERELTSALFNEEVESDIRKRNQLTAADEINYICCNSTLLKNFLDNCNVNVTDEVKLEINVHRLSITAFTKAVYGKNNDLLRNALSMSNTISTLDLEHYCLFTTIEDEKQDKRSHSKRREHMKSIIFKLKDFKNFITIGPSWKTTQDGNDNISLWFCHPGDPILMQMQKPGVKLELVEVTDSNINDDILEGKFIKTAISGSKEEAGLKDNKESCESPLKSKTALKRENLPHSVAGTRNSPLKVSYLTPDNGSTVAKTYRNNTARKLFVEEQSQSTNYEQDKRFRQASSVHMNMNREQSFDIGTTHEVACPRNESNSLKRSIADICNETEDPTQQSTFAKRADTTVTWGKALPAADDEVSCSNIDRKGMLKKEKLKHMQGLLNSQNDTSNHKKQDNKEMEDGLGLTQVEKPRGIFD.

A Phosphoserine modification is found at Ser-436. The tract at residues 576-612 is disordered; it reads GLLNSQNDTSNHKKQDNKEMEDGLGLTQVEKPRGIFD. The segment covering 585–596 has biased composition (basic and acidic residues); that stretch reads SNHKKQDNKEME.

This sequence belongs to the DDC1 family. In terms of assembly, component of the checkpoint clamp complex composed of DDC1, MEC3 and RAD17. The interaction with MEC3 is performed in a RAD17-dependent manner. The checkpoint clamp complex loads onto DNA in an ATP-dependent manner through its interaction with the RFC-RAD4 checkpoint clamp loader complex. Interacts with the DNA polymerase zeta subunit REV7 and DPB11. Phosphorylated during cell cycle S-phase and in response to DNA damage. This phosphorylation is MEC14 dependent. Also hosphorylated by CDC28.

It is found in the cytoplasm. It localises to the nucleus. Its function is as follows. Component of the checkpoint clamp complex involved in the surveillance mechanism that allows the DNA repair pathways to act to restore the integrity of the DNA prior to DNA synthesis or separation of the replicated chromosomes. Associates with sites of DNA damage and modulates the MEC1 signaling pathway and the activation of RAD53 in response to DNA damage at phase G1. The complex also physically regulates DNA polymerase zeta-dependent mutagenesis by controlling the access of polymerase zeta to damaged DNA. This is DNA damage checkpoint protein 1 (DDC1) from Saccharomyces cerevisiae (strain ATCC 204508 / S288c) (Baker's yeast).